Consider the following 273-residue polypeptide: 4-hydroxy-tetrahydrodipicolinate reductase (273 aa).

NAD(+) contacts are provided by residues 12–17 (GAGGRM) and Glu-38. Position 39 (Arg-39) interacts with NADP(+). NAD(+) is bound by residues 102–104 (GTT) and 126–129 (AANF). The active-site Proton donor/acceptor is the His-159. A (S)-2,3,4,5-tetrahydrodipicolinate-binding site is contributed by His-160. The active-site Proton donor is the Lys-163. 169 to 170 (GT) provides a ligand contact to (S)-2,3,4,5-tetrahydrodipicolinate.

It belongs to the DapB family. As to quaternary structure, homotetramer.

Its subcellular location is the cytoplasm. The catalysed reaction is (S)-2,3,4,5-tetrahydrodipicolinate + NAD(+) + H2O = (2S,4S)-4-hydroxy-2,3,4,5-tetrahydrodipicolinate + NADH + H(+). It carries out the reaction (S)-2,3,4,5-tetrahydrodipicolinate + NADP(+) + H2O = (2S,4S)-4-hydroxy-2,3,4,5-tetrahydrodipicolinate + NADPH + H(+). The protein operates within amino-acid biosynthesis; L-lysine biosynthesis via DAP pathway; (S)-tetrahydrodipicolinate from L-aspartate: step 4/4. In terms of biological role, catalyzes the conversion of 4-hydroxy-tetrahydrodipicolinate (HTPA) to tetrahydrodipicolinate. This is 4-hydroxy-tetrahydrodipicolinate reductase from Shigella boydii serotype 4 (strain Sb227).